The sequence spans 662 residues: MAVLTHGSPTPSGAHFDGKGINFTLFSAHAEQVTLCLFDEQGQERQIAMPARTGDIWHGYLPGGKPGQRYGYRVSGPFEPSRGHRFNPHKLLIDPRTRALEGKVGDDPRFTGGVSQPDVRDSAAALPKCLVIHEEYDWQGDKPPAIPWGNTVIYEAHVRGLTQLHPDIPPELRGTYAALAHPALIEHLKTLGITTLELLPVQFHIDEPRLQKMGLSNYWGYNVLAPFAVDPDYASGREGISPLRELRDAVKALHNAGIEVILDVVFNHSAELDVFGPTLCQRGIDNASYYWLTPDGEYDNITGCGNALRLSHPYVTQWVIDCLNYWRDSCHVDGFRFDLGTVLGRTPAFDQHAPLFAALAADERLSACKLIAEPWDIGLGGYQLGNFPTGFSEWNDQYRDAMRGFWLRGEVPRGTFAQHFAASSSLFEQRGRLPSASINQITAHDGFTLLDLLCFNQKHNQMNGEENRDGSDNNHSNNFGCEGLVADAAIWQRRKACQRALLTTLLLSQGTPMLLAGDEQGHSQQGNNNAYCQNNILTWLDWGSADRALMTFTADLIRLRQQIPALTQDQWWQSGDSNVQWLDSQGQALSDAAWEQGCQQQLQILLSQRWLVLINATDHECEMHLPEGEWEGIPPFGVSDHAERLTTWRGSAHTICVLIKRD.

D338 (nucleophile) is an active-site residue. The active-site Proton donor is the E373.

Belongs to the glycosyl hydrolase 13 family.

It catalyses the reaction Hydrolysis of (1-&gt;6)-alpha-D-glucosidic linkages to branches with degrees of polymerization of three or four glucose residues in limit dextrin.. Its pathway is glycan degradation; glycogen degradation. Functionally, removes maltotriose and maltotetraose chains that are attached by 1,6-alpha-linkage to the limit dextrin main chain, generating a debranched limit dextrin. The polypeptide is Glycogen debranching enzyme (Yersinia pestis bv. Antiqua (strain Angola)).